The following is a 720-amino-acid chain: Glutaryl-7-aminocephalosporanic-acid acylase (720 aa).

The signal sequence occupies residues 1-29; it reads MLRVLHRAASALVMATVIGLAPAVAFALA. The propeptide at 190 to 198 is spacer peptide; sequence DPPDLADQG. Ser-199 functions as the Nucleophile in the catalytic mechanism. Active-site residues include His-221 and Glu-653.

The protein belongs to the peptidase S45 family. In terms of assembly, heterotetramer of two alpha and two beta subunits processed from the same precursor.

Its subcellular location is the periplasm. It catalyses the reaction (7R)-7-(4-carboxybutanamido)cephalosporanate + H2O = (7R)-7-aminocephalosporanate + glutarate. Functionally, catalyzes the deacylation of 7 beta-(4-carboxybutanamido)cephalosporanic acid (glutaryl-7-aminocephalosporanic acid or GL-7-ACA) to 7-aminocephalosporanic acid (7-ACA). The protein is Glutaryl-7-aminocephalosporanic-acid acylase of Pseudomonas sp. (strain SY-77).